A 593-amino-acid chain; its full sequence is Pyruvate decarboxylase 1 (593 aa).

The span at 1–19 (METETETPNGSTPCPTSAP) shows a compositional bias: polar residues. Residues 1-20 (METETETPNGSTPCPTSAPS) are disordered. Residues aspartate 55 and histidine 142 each coordinate substrate. A thiamine pyrophosphate binding region spans residues 420 to 502 (DSWFNCQKLR…FLINNGGYTI (83 aa)). Mg(2+) contacts are provided by aspartate 470, asparagine 497, and glycine 499. Position 503 (glutamate 503) interacts with substrate.

The protein belongs to the TPP enzyme family. As to quaternary structure, homotetramer. It depends on a metal cation as a cofactor. Thiamine diphosphate serves as cofactor.

It catalyses the reaction a 2-oxocarboxylate + H(+) = an aldehyde + CO2. The polypeptide is Pyruvate decarboxylase 1 (PDC1) (Pisum sativum (Garden pea)).